The primary structure comprises 423 residues: Histidine--tRNA ligase (423 aa).

It belongs to the class-II aminoacyl-tRNA synthetase family. Homodimer.

The protein localises to the cytoplasm. It carries out the reaction tRNA(His) + L-histidine + ATP = L-histidyl-tRNA(His) + AMP + diphosphate + H(+). The polypeptide is Histidine--tRNA ligase (Geobacillus sp. (strain WCH70)).